The chain runs to 305 residues: U6 small nuclear RNA (adenine-(43)-N(6))-methyltransferase (305 aa).

S-adenosyl-L-methionine contacts are provided by Arg-85, Gly-110, Glu-133, Ser-164, and Asn-186. Residues 194–217 form a disordered region; it reads SPNPFGGNTRNPQRRPAPNNVRTG.

The protein belongs to the methyltransferase superfamily. METTL16/RlmF family.

The catalysed reaction is adenosine in U6 snRNA + S-adenosyl-L-methionine = N(6)-methyladenosine in U6 snRNA + S-adenosyl-L-homocysteine + H(+). In terms of biological role, RNA N6-methyltransferase that mediates N6-methylation of adenine of U6 small nuclear RNA (U6 snRNA). This chain is U6 small nuclear RNA (adenine-(43)-N(6))-methyltransferase, found in Drosophila pseudoobscura pseudoobscura (Fruit fly).